Here is an 86-residue protein sequence, read N- to C-terminus: Large ribosomal subunit protein bL27 (86 aa).

Positions 1–24 (MAHKKAGGSSRNGRDSEGRRLGVK) are disordered.

It belongs to the bacterial ribosomal protein bL27 family.

In Magnetococcus marinus (strain ATCC BAA-1437 / JCM 17883 / MC-1), this protein is Large ribosomal subunit protein bL27.